A 268-amino-acid chain; its full sequence is Ubiquinone biosynthesis protein COQ4 homolog, mitochondrial (268 aa).

Residues His171, Asp172, His175, and Glu187 each coordinate Zn(2+).

It belongs to the COQ4 family. In terms of assembly, component of a multi-subunit COQ enzyme complex. Zn(2+) is required as a cofactor.

The protein resides in the mitochondrion inner membrane. It catalyses the reaction a 4-hydroxy-3-methoxy-5-(all-trans-polyprenyl)benzoate + H(+) = a 2-methoxy-6-(all-trans-polyprenyl)phenol + CO2. Its pathway is cofactor biosynthesis; ubiquinone biosynthesis. Functionally, lyase that catalyzes the C1-decarboxylation of 4-hydroxy-3-methoxy-5-(all-trans-polyprenyl)benzoic acid into 2-methoxy-6-(all-trans-polyprenyl)phenol during ubiquinone biosynthesis. This Drosophila melanogaster (Fruit fly) protein is Ubiquinone biosynthesis protein COQ4 homolog, mitochondrial.